The sequence spans 367 residues: Ribosomal lysine N-methyltransferase 5 (367 aa).

Residues 55-74 are disordered; it reads EGGRKKKRVRRRNKASSVEE. Basic residues predominate over residues 58-68; sequence RKKKRVRRRNK. S-adenosyl-L-methionine-binding positions include Trp-110, 170–172, Asp-192, Trp-256, and Met-288; that span reads GAG.

The protein belongs to the class I-like SAM-binding methyltransferase superfamily. RKM5 family.

In terms of biological role, S-adenosyl-L-methionine-dependent protein-lysine N-methyltransferase that monomethylates 60S ribosomal protein L1 (RPL1A and RPL1B) at 'Lys-46'. The chain is Ribosomal lysine N-methyltransferase 5 (RKM5) from Saccharomyces cerevisiae (strain Lalvin EC1118 / Prise de mousse) (Baker's yeast).